The following is a 498-amino-acid chain: Ammonium transporter 1 member 1 (498 aa).

11 helical membrane-spanning segments follow: residues 39–59, 74–94, 120–140, 148–168, 192–212, 236–256, 274–296, 307–327, 331–351, 360–380, and 411–431; these read LLFS…LCAG, VLDA…FAFG, FFLF…GSIA, YLIY…HWIW, FAGS…GALI, LVVL…PGSF, SGVG…TTLF, VVDV…GCSV, WAAI…NALA, LEAA…TALF, and VIQI…LFYG.

This sequence belongs to the ammonia transporter channel (TC 1.A.11.2) family. Expressed in roots and shoots.

Its subcellular location is the membrane. In terms of biological role, ammonium transporter probably involved in ammonium uptake from the soil. The sequence is that of Ammonium transporter 1 member 1 (AMT1-1) from Oryza sativa subsp. japonica (Rice).